Consider the following 885-residue polypeptide: MTDNKDDKTISVAGKKTLTLKPSGVTQGTVRQDMGRGRTKAVVVETKRTRSPLKHKDERPITPVAAAPAAARPAEQRPMPPQPSGRPAPQPQPHQPRQEQNRPRGGVVLNDLSASEMEARRHALAAAQIRDAEEAKRRAEEEVRRRREEEERIAREKEEAARRAAEEAARPAVEAEKVEEKVEAATPAVAETRPLSERPAPAATPPAPAGVAPRGRRAGEDEEGERRHSSAGAPRGKVVRPEPAKPAPRAKGDEGRRQGKLTLTAAVDEDGSQRGRSLSAMRRRQEKFKRSQMQETREKISREVILPETITIQELSQRMSERAVDVIKFLMKEGQMMKPGDLIDADLAELIAGEFGHTVKRVSESDVEEGIFNISDADDEMHARPPIVTIMGHVDHGKTSLLDAIRHANVVAGEAGGITQHIGAYQVEQNGQKITFIDTPGHAAFTAMRARGAQATDIAILVVAADDSVMPQTIESINHAKAAGVPIIVAINKIDKPSADPQKVRTELLQHEVFVESMGGEVLDVEVSAKNQTNLDKLLEAILLQSEILDLKANPNRTAEGTVVEAELDRGRGAVATVLVQKGTLTPGQIIVAGDQWGRVRALVNDKGEHVKSAGPSTPVEVLGLSGTPAAGDRFAVVESESRAREISEYRQRLAREKAVARQSGSRGSLEQMMTQLQTSGVKEFPLVIKGDVQGSIEAISGALEKLGTDEVRARIVHSGAGGITESDVSLAEASNAAIIGFNVRANKQARDASERAGIEIRYYNIIYDLVDDVKAAMSGLLSPERRETFLGNAEILEVFNITKVGKVAGCRVTEGKVERGVGVRLVRDNVVIHEGKLKTLKRFKDEVSEVQSGQECGMAFENYEDIRAGDTIECFRVEHVTRTL.

Positions 1–295 (MTDNKDDKTI…EKFKRSQMQE (295 aa)) are disordered. Positions 63–77 (PVAAAPAAARPAEQR) are enriched in low complexity. Residues 78–94 (PMPPQPSGRPAPQPQPH) show a composition bias toward pro residues. Positions 130–183 (RDAEEAKRRAEEEVRRRREEEERIAREKEEAARRAAEEAARPAVEAEKVEEKVE) are enriched in basic and acidic residues. A compositionally biased stretch (low complexity) spans 184 to 201 (AATPAVAETRPLSERPAP). The 168-residue stretch at 383-550 (ARPPIVTIMG…AILLQSEILD (168 aa)) folds into the tr-type G domain. The G1 stretch occupies residues 392-399 (GHVDHGKT). 392–399 (GHVDHGKT) serves as a coordination point for GTP. The G2 stretch occupies residues 417–421 (GITQH). The tract at residues 438–441 (DTPG) is G3. GTP-binding positions include 438–442 (DTPGH) and 492–495 (NKID). Residues 492–495 (NKID) are G4. A G5 region spans residues 528 to 530 (SAK).

This sequence belongs to the TRAFAC class translation factor GTPase superfamily. Classic translation factor GTPase family. IF-2 subfamily.

It localises to the cytoplasm. In terms of biological role, one of the essential components for the initiation of protein synthesis. Protects formylmethionyl-tRNA from spontaneous hydrolysis and promotes its binding to the 30S ribosomal subunits. Also involved in the hydrolysis of GTP during the formation of the 70S ribosomal complex. This chain is Translation initiation factor IF-2, found in Sinorhizobium medicae (strain WSM419) (Ensifer medicae).